A 156-amino-acid polypeptide reads, in one-letter code: Cell division protein SepF (156 aa).

The segment at 30–49 is disordered; it reads NAAAPSTTETSVVRQDDRPK.

This sequence belongs to the SepF family. Homodimer. Interacts with FtsZ.

The protein resides in the cytoplasm. Its function is as follows. Cell division protein that is part of the divisome complex and is recruited early to the Z-ring. Probably stimulates Z-ring formation, perhaps through the cross-linking of FtsZ protofilaments. Its function overlaps with FtsA. In Exiguobacterium sp. (strain ATCC BAA-1283 / AT1b), this protein is Cell division protein SepF.